A 1408-amino-acid chain; its full sequence is DNA-directed RNA polymerase subunit beta' (1408 aa).

C70, C72, C85, and C88 together coordinate Zn(2+). Residues D460, D462, and D464 each coordinate Mg(2+). Positions 814, 888, 895, and 898 each coordinate Zn(2+).

This sequence belongs to the RNA polymerase beta' chain family. The RNAP catalytic core consists of 2 alpha, 1 beta, 1 beta' and 1 omega subunit. When a sigma factor is associated with the core the holoenzyme is formed, which can initiate transcription. Requires Mg(2+) as cofactor. It depends on Zn(2+) as a cofactor.

The enzyme catalyses RNA(n) + a ribonucleoside 5'-triphosphate = RNA(n+1) + diphosphate. DNA-dependent RNA polymerase catalyzes the transcription of DNA into RNA using the four ribonucleoside triphosphates as substrates. This is DNA-directed RNA polymerase subunit beta' from Serratia proteamaculans (strain 568).